The sequence spans 242 residues: Ribosomal RNA small subunit methyltransferase G (242 aa).

S-adenosyl-L-methionine is bound by residues G81, F86, 104-106 (DST), 132-133 (AE), and R151.

It belongs to the methyltransferase superfamily. RNA methyltransferase RsmG family.

It localises to the cytoplasm. Its function is as follows. Specifically methylates the N7 position of a guanine in 16S rRNA. This Synechococcus elongatus (strain ATCC 33912 / PCC 7942 / FACHB-805) (Anacystis nidulans R2) protein is Ribosomal RNA small subunit methyltransferase G.